Here is a 183-residue protein sequence, read N- to C-terminus: Glutathione-regulated potassium-efflux system ancillary protein KefG (183 aa).

Belongs to the NAD(P)H dehydrogenase (quinone) family. KefG subfamily. Interacts with KefB.

The protein resides in the cell inner membrane. The enzyme catalyses a quinone + NADH + H(+) = a quinol + NAD(+). It catalyses the reaction a quinone + NADPH + H(+) = a quinol + NADP(+). In terms of biological role, regulatory subunit of a potassium efflux system that confers protection against electrophiles. Required for full activity of KefB. The protein is Glutathione-regulated potassium-efflux system ancillary protein KefG of Pectobacterium carotovorum subsp. carotovorum (strain PC1).